Reading from the N-terminus, the 370-residue chain is Aminomethyltransferase (370 aa).

This sequence belongs to the GcvT family. As to quaternary structure, the glycine cleavage system is composed of four proteins: P, T, L and H.

It catalyses the reaction N(6)-[(R)-S(8)-aminomethyldihydrolipoyl]-L-lysyl-[protein] + (6S)-5,6,7,8-tetrahydrofolate = N(6)-[(R)-dihydrolipoyl]-L-lysyl-[protein] + (6R)-5,10-methylene-5,6,7,8-tetrahydrofolate + NH4(+). In terms of biological role, the glycine cleavage system catalyzes the degradation of glycine. The polypeptide is Aminomethyltransferase (Clostridium botulinum (strain Okra / Type B1)).